A 1592-amino-acid chain; its full sequence is Laminin subunit gamma-1 (1592 aa).

The first 19 residues, 1-19 (MRAPVLAVLAVLLLGTVRA), serve as a signal peptide directing secretion. A Laminin N-terminal domain is found at 29–268 (SPQRCMPEFV…AISDFAVGGR (240 aa)). N43 and N117 each carry an N-linked (GlcNAc...) asparagine glycan. 16 disulfide bridges follow: C269-C278, C271-C288, C290-C299, C302-C322, C325-C334, C327-C350, C353-C362, C365-C378, C381-C393, C383-C399, C401-C410, C413-C425, C428-C439, C430-C446, C448-C457, and C460-C475. 4 consecutive Laminin EGF-like domains span residues 269–324 (CKCN…ECLP), 325–380 (CNCN…PCHA), 381–427 (CQCN…GCRP), and 428–477 (CACN…GCTP). In terms of domain architecture, Laminin IV type A spans 504-672 (SGVEGWTAQQ…AGPSAPWVEI (169 aa)). 2 N-linked (GlcNAc...) asparagine glycosylation sites follow: N559 and N633. Disulfide bonds link C707/C716, C709/C723, C725/C734, C737/C753, C756/C764, C758/C775, C778/C787, C790/C808, C811/C825, C813/C832, C835/C844, C847/C864, C867/C881, C869/C888, C890/C899, C902/C915, C918/C930, C920/C937, C939/C948, C951/C963, C966/C978, C968/C984, C986/C995, and C998/C1011. 6 consecutive Laminin EGF-like domains span residues 707 to 755 (CTCN…DCQP), 756 to 810 (CPCP…PCRI), 811 to 866 (CECS…KCRA), 867 to 917 (CSCN…GCER), 918 to 965 (CDCH…GCKP), and 966 to 1013 (CDCD…GCQE). N-linked (GlcNAc...) asparagine glycans are attached at residues N1005, N1041, N1048, N1090, N1144, N1158, N1188, N1206, N1253, N1363, and N1386. Positions 1013–1592 (ECPACYRLVK…CYNTPIIEKP (580 aa)) are domain II and I. A coiled-coil region spans residues 1018–1477 (YRLVKDKVNE…DEKMAEMASN (460 aa)). Residues 1456 to 1472 (NQLKKKQAEAESDEKMA) show a composition bias toward basic and acidic residues. Positions 1456–1489 (NQLKKKQAEAESDEKMAEMASNATKDAESNANNS) are disordered. Residues 1476–1489 (SNATKDAESNANNS) are compositionally biased toward polar residues. N-linked (GlcNAc...) asparagine glycans are attached at residues N1477 and N1487. The stretch at 1515-1579 (VGQLTVLEKT…ANLEDIKNTL (65 aa)) forms a coiled coil.

Laminin is a complex glycoprotein, consisting of three different polypeptide chains (alpha, beta, gamma), which are bound to each other by disulfide bonds into a cross-shaped molecule comprising one long and three short arms with globules at each end.

The protein resides in the secreted. It localises to the extracellular space. It is found in the extracellular matrix. Its subcellular location is the basement membrane. Its function is as follows. Binding to cells via a high affinity receptor, laminin is thought to mediate the attachment, migration and organization of cells into tissues during embryonic development by interacting with other extracellular matrix components. The sequence is that of Laminin subunit gamma-1 (lamc1) from Xenopus tropicalis (Western clawed frog).